Consider the following 367-residue polypeptide: Terpene cyclase verU1 (367 aa).

A helical membrane pass occupies residues 8–28 (IRCSLLLLGLVGIYTVWISSF). N-linked (GlcNAc...) asparagine glycosylation is present at asparagine 50. Transmembrane regions (helical) follow at residues 57–77 (FTGI…YWPV), 85–105 (LSLI…LFAL), 120–140 (MAMF…PIYC), 169–189 (CLLG…PAVV), 197–217 (IIAL…LTHL), 239–259 (ISAM…SLLA), 292–312 (FQWD…GLHI), and 327–347 (LIPE…AALY). N-linked (GlcNAc...) asparagine glycosylation occurs at asparagine 352.

Belongs to the membrane-bound ascI terpene cyclase family.

The protein resides in the membrane. It participates in secondary metabolite biosynthesis; terpenoid biosynthesis. Its pathway is mycotoxin biosynthesis. Terpene cyclase; part of the gene cluster that mediates the biosynthesis of the neurotoxin verrucosidin, a methylated alpha-pyrone polyketide that inhibits oxidative phosphorylation in mitochondria and thereby causes neurological diseases. The carbon backbone of verrucosidin is synthesized by the HR-PKS verA, and further modified by the other verrucodidin cluster enzymes. The polypeptide is Terpene cyclase verU1 (Penicillium polonicum).